The chain runs to 190 residues: Probable E3 ubiquitin-protein ligase RHB1A (190 aa).

The RING-type; atypical zinc-finger motif lies at Cys139–Asp180.

It catalyses the reaction S-ubiquitinyl-[E2 ubiquitin-conjugating enzyme]-L-cysteine + [acceptor protein]-L-lysine = [E2 ubiquitin-conjugating enzyme]-L-cysteine + N(6)-ubiquitinyl-[acceptor protein]-L-lysine.. Its pathway is protein modification; protein ubiquitination. In terms of biological role, probable E3 ubiquitin-protein ligase that may possess E3 ubiquitin ligase activity in vitro. The sequence is that of Probable E3 ubiquitin-protein ligase RHB1A from Arabidopsis thaliana (Mouse-ear cress).